Consider the following 192-residue polypeptide: Ferritin-like protein (192 aa).

The Fe(3+) site is built by His-44, Glu-48, and His-102. Residues 143 to 179 (RFDHDYADPHAHHDEHRDHLADMPSAGSSHEEVQPVA) are linker. Over residues 149–163 (ADPHAHHDEHRDHLA) the composition is skewed to basic and acidic residues. The interval 149-192 (ADPHAHHDEHRDHLADMPSAGSSHEEVQPVAHKKKGFTVGSLIQ) is disordered. The interval 180–192 (HKKKGFTVGSLIQ) is targeting peptide.

In terms of assembly, homodimer, with 2 Fe atoms bound at the subunit interface (without encapsulin), probably also a dimer when encapsulated. 42 electron-dense accretions can be seen inside the nanocompartment which are probably this cargo protein, although perhaps up to one cargo dimer can be bound per shell protein.

Its subcellular location is the encapsulin nanocompartment. The catalysed reaction is 4 Fe(2+) + O2 + 4 H(+) = 4 Fe(3+) + 2 H2O. Cargo protein of a type 1 encapsulin nanocompartment. A ferritin-like iron-binding protein probably involved in iron mineralization in the encapsulin nanocompartment. Has ferroxidase activity even when encapsulated, the rate is probably controlled by the rate of Fe flux across the nanocompartment pores. Part of the iron-mineralizing encapsulin-associated Firmicute (IMEF) system. 2 different cargo proteins have been identified (IMEF and Fer); when both are expressed in E.coli with the shell protein only IMEF is detected within the nanocompartment. E.coli expressing all 3 genes stores the largest amount of iron and is protected from Fe/H2O2-induced oxidative stress. The polypeptide is Ferritin-like protein (Bacillus thermotolerans (Quasibacillus thermotolerans)).